The sequence spans 122 residues: Semaphorin-like protein A43 (122 aa).

The Sema domain occupies 1-122 (MIYLYTADNV…RIMYLFYEYH (122 aa)).

Belongs to the semaphorin family.

The chain is Semaphorin-like protein A43 (A43R) from Homo sapiens (Human).